Here is a 458-residue protein sequence, read N- to C-terminus: Ribosomal protein uS12 methylthiotransferase RimO (458 aa).

Positions 6-116 (PKVGFVSLGC…VMEAVHAALP (111 aa)) constitute an MTTase N-terminal domain. 6 residues coordinate [4Fe-4S] cluster: Cys-15, Cys-51, Cys-80, Cys-147, Cys-151, and Cys-154. The 239-residue stretch at 133–371 (LTPRHYAYLK…AKQAQISALR (239 aa)) folds into the Radical SAM core domain. The TRAM domain occupies 373-441 (ESKIGSVQQC…EHDLFGDALP (69 aa)).

It belongs to the methylthiotransferase family. RimO subfamily. [4Fe-4S] cluster serves as cofactor.

It is found in the cytoplasm. It catalyses the reaction L-aspartate(89)-[ribosomal protein uS12]-hydrogen + (sulfur carrier)-SH + AH2 + 2 S-adenosyl-L-methionine = 3-methylsulfanyl-L-aspartate(89)-[ribosomal protein uS12]-hydrogen + (sulfur carrier)-H + 5'-deoxyadenosine + L-methionine + A + S-adenosyl-L-homocysteine + 2 H(+). Functionally, catalyzes the methylthiolation of an aspartic acid residue of ribosomal protein uS12. This Xanthomonas euvesicatoria pv. vesicatoria (strain 85-10) (Xanthomonas campestris pv. vesicatoria) protein is Ribosomal protein uS12 methylthiotransferase RimO.